We begin with the raw amino-acid sequence, 327 residues long: GTPase Obg (327 aa).

The region spanning 1–159 is the Obg domain; it reads MQFIDQANII…WEVQLELKLL (159 aa). Residues 160–327 form the OBG-type G domain; sequence AEVGIIGLPN…SLLSEVWKRI (168 aa). ATP contacts are provided by residues 166 to 173, 191 to 195, 213 to 216, 280 to 283, and 309 to 311; these read GLPNAGKS, FTTLI, DIPG, NKIE, and SSS. Mg(2+)-binding residues include Ser173 and Thr193.

This sequence belongs to the TRAFAC class OBG-HflX-like GTPase superfamily. OBG GTPase family. As to quaternary structure, monomer. Mg(2+) serves as cofactor.

The protein resides in the cytoplasm. Its function is as follows. An essential GTPase which binds GTP, GDP and possibly (p)ppGpp with moderate affinity, with high nucleotide exchange rates and a fairly low GTP hydrolysis rate. Plays a role in control of the cell cycle, stress response, ribosome biogenesis and in those bacteria that undergo differentiation, in morphogenesis control. The polypeptide is GTPase Obg (Prochlorococcus marinus (strain AS9601)).